The following is a 62-amino-acid chain: Spanin, outer lipoprotein subunit (62 aa).

The signal sequence occupies residues 1–19 (MRKLKMMLCVMMLPLVVVG). Cysteine 20 carries N-palmitoyl cysteine; by host lipidation. Cysteine 20 is lipidated: S-diacylglycerol cysteine; by host. The Periplasmic portion of the chain corresponds to 20–62 (CTSKQSVSQCVKPRLPPAWIMQPPPDFTWQTPLNGIISPSERG). Positions 32 to 44 (PRLPPAWIMQPPP) are proline-rich.

The protein belongs to the Lambdavirus o-spanin family. In terms of assembly, homodimer; disulfide-linked. Interacts (via C-terminus) with the spanin inner membrane subunit (via C-terminus). Part of the spanin complex which spans the entire periplasmic space. The spanin complex is composed of one homodimer of the i-spanin linked by intermolecular disulfide bonds involving two Cys residues and one homodimer of the o-spanin covalently linked by an intermolecular disulfide bond involving one Cys.

The protein resides in the host cell outer membrane. Its function is as follows. Component of the spanin complex that disrupts the host outer membrane and participates in cell lysis during virus exit. The spanin complex conducts the final step in host lysis by disrupting the outer membrane after holin and endolysin action have permeabilized the inner membrane and degraded the host peptidoglycans. Host outer membrane disruption is due to local fusion between the inner and outer membrane performed by the spanin complex. This Escherichia coli (Bacteriophage 21) protein is Spanin, outer lipoprotein subunit (Rz1).